The chain runs to 238 residues: tRNA (guanine-N(7)-)-methyltransferase (238 aa).

The S-adenosyl-L-methionine site is built by Glu-68, Glu-93, Asp-120, and Asp-143. Asp-143 is a catalytic residue. Substrate contacts are provided by residues Lys-147, Asp-179, and 216 to 219 (TKFE).

Belongs to the class I-like SAM-binding methyltransferase superfamily. TrmB family.

The enzyme catalyses guanosine(46) in tRNA + S-adenosyl-L-methionine = N(7)-methylguanosine(46) in tRNA + S-adenosyl-L-homocysteine. Its pathway is tRNA modification; N(7)-methylguanine-tRNA biosynthesis. In terms of biological role, catalyzes the formation of N(7)-methylguanine at position 46 (m7G46) in tRNA. The sequence is that of tRNA (guanine-N(7)-)-methyltransferase from Shewanella oneidensis (strain ATCC 700550 / JCM 31522 / CIP 106686 / LMG 19005 / NCIMB 14063 / MR-1).